The chain runs to 179 residues: ATP synthase subunit delta (179 aa).

It belongs to the ATPase delta chain family. F-type ATPases have 2 components, F(1) - the catalytic core - and F(0) - the membrane proton channel. F(1) has five subunits: alpha(3), beta(3), gamma(1), delta(1), epsilon(1). F(0) has three main subunits: a(1), b(2) and c(10-14). The alpha and beta chains form an alternating ring which encloses part of the gamma chain. F(1) is attached to F(0) by a central stalk formed by the gamma and epsilon chains, while a peripheral stalk is formed by the delta and b chains.

It localises to the cell membrane. Its function is as follows. F(1)F(0) ATP synthase produces ATP from ADP in the presence of a proton or sodium gradient. F-type ATPases consist of two structural domains, F(1) containing the extramembraneous catalytic core and F(0) containing the membrane proton channel, linked together by a central stalk and a peripheral stalk. During catalysis, ATP synthesis in the catalytic domain of F(1) is coupled via a rotary mechanism of the central stalk subunits to proton translocation. In terms of biological role, this protein is part of the stalk that links CF(0) to CF(1). It either transmits conformational changes from CF(0) to CF(1) or is implicated in proton conduction. The chain is ATP synthase subunit delta from Staphylococcus aureus (strain bovine RF122 / ET3-1).